The sequence spans 385 residues: Circadian-associated transcriptional repressor (385 aa).

Positions methionine 1 to serine 26 are enriched in low complexity. Disordered stretches follow at residues methionine 1–threonine 108, glycine 203–aspartate 233, and glycine 365–leucine 385. Over residues aspartate 33–arginine 45 the composition is skewed to basic and acidic residues. The segment covering valine 70 to histidine 79 has biased composition (polar residues).

In terms of assembly, interacts with PER2, CRY2, BHLHE41, HDAC1 and NR3C1. Interacts with BMAL1.

Its subcellular location is the nucleus. The protein localises to the PML body. Its function is as follows. Transcriptional repressor which forms a negative regulatory component of the circadian clock and acts independently of the circadian transcriptional repressors: CRY1, CRY2 and BHLHE41. In a histone deacetylase-dependent manner represses the transcriptional activator activity of the CLOCK-BMAL1 heterodimer. Abrogates the interaction of BMAL1 with the transcriptional coactivator CREBBP and can repress the histone acetyl-transferase activity of the CLOCK-BMAL1 heterodimer, reducing histone acetylation of its target genes. Rhythmically binds the E-box elements (5'-CACGTG-3') on circadian gene promoters and its occupancy shows circadian oscillation antiphasic to BMAL1. Interacts with the glucocorticoid receptor (NR3C1) and contributes to the repressive function in the glucocorticoid response. In Homo sapiens (Human), this protein is Circadian-associated transcriptional repressor (CIART).